The primary structure comprises 367 residues: Histidinol-phosphate aminotransferase 1 (367 aa).

Lys-226 carries the post-translational modification N6-(pyridoxal phosphate)lysine.

This sequence belongs to the class-II pyridoxal-phosphate-dependent aminotransferase family. Histidinol-phosphate aminotransferase subfamily. Homodimer. Pyridoxal 5'-phosphate is required as a cofactor.

It carries out the reaction L-histidinol phosphate + 2-oxoglutarate = 3-(imidazol-4-yl)-2-oxopropyl phosphate + L-glutamate. Its pathway is amino-acid biosynthesis; L-histidine biosynthesis; L-histidine from 5-phospho-alpha-D-ribose 1-diphosphate: step 7/9. In Haemophilus influenzae (strain ATCC 51907 / DSM 11121 / KW20 / Rd), this protein is Histidinol-phosphate aminotransferase 1 (hisC1).